A 292-amino-acid chain; its full sequence is MMSTKIDGKQIAAEIKTNLAERVNKLKAQGIQPGLGTLLVGEDPGSMKYVAGKHADCQEVGITSVKKELPADASFDDIAAAVRELNEDPACTGFIVQLPLPKGINENAIIDMIDPAKDADGMHPYNLGELVLHVRGDISTPLPCTPRGVLELLDAYDIDLNGKEVCVLGRGITIGRTIGLMLTRNAVNATVTLCHTGTRDVADHMRRADVIVAAMGSAGFVTPDKIKDGAVLVDVGVSRVYDEEAGRYRIKGDVDKACYDKASAYTPNPGGVGPMTRAMLLANVVEMAERHA.

Residues 169–171, Thr196, and Val237 each bind NADP(+); that span reads GRG.

Belongs to the tetrahydrofolate dehydrogenase/cyclohydrolase family. Homodimer.

It catalyses the reaction (6R)-5,10-methylene-5,6,7,8-tetrahydrofolate + NADP(+) = (6R)-5,10-methenyltetrahydrofolate + NADPH. The enzyme catalyses (6R)-5,10-methenyltetrahydrofolate + H2O = (6R)-10-formyltetrahydrofolate + H(+). The protein operates within one-carbon metabolism; tetrahydrofolate interconversion. Functionally, catalyzes the oxidation of 5,10-methylenetetrahydrofolate to 5,10-methenyltetrahydrofolate and then the hydrolysis of 5,10-methenyltetrahydrofolate to 10-formyltetrahydrofolate. The chain is Bifunctional protein FolD from Bifidobacterium longum (strain NCC 2705).